The sequence spans 205 residues: Lymphotoxin-alpha (205 aa).

Positions 1–34 (MTPPERLFLPRVCGTTLHLLLLGLLLVLLPGAQG) are cleaved as a signal peptide. Threonine 41 carries an O-linked (GalNAc...) threonine; partial glycan. Residues 63–205 (PAAHLIGDPS…STVFFGAFAL (143 aa)) form the THD domain. The N-linked (GlcNAc...) asparagine glycan is linked to asparagine 96.

This sequence belongs to the tumor necrosis factor family. Homotrimer, and heterotrimer of either two LTB and one LTA subunits or (less prevalent) two LTA and one LTB subunits. Interacts with TNFRSF14.

It is found in the secreted. It localises to the membrane. Functionally, cytokine that in its homotrimeric form binds to TNFRSF1A/TNFR1, TNFRSF1B/TNFBR and TNFRSF14/HVEM. In its heterotrimeric form with LTB binds to TNFRSF3/LTBR. Lymphotoxin is produced by lymphocytes and is cytotoxic for a wide range of tumor cells in vitro and in vivo. The chain is Lymphotoxin-alpha (LTA) from Homo sapiens (Human).